A 394-amino-acid chain; its full sequence is Alanine--glyoxylate aminotransferase (394 aa).

Pyridoxal 5'-phosphate is bound by residues Ala-76 to His-78, Ser-153, and Gln-204. Ser-153 provides a ligand contact to substrate. The residue at position 205 (Lys-205) is an N6-(pyridoxal phosphate)lysine. 2 residues coordinate pyridoxal 5'-phosphate: Tyr-256 and Thr-259. Arg-356 lines the substrate pocket.

This sequence belongs to the class-V pyridoxal-phosphate-dependent aminotransferase family. Homodimer. Pyridoxal 5'-phosphate is required as a cofactor.

The protein localises to the peroxisome. The enzyme catalyses glyoxylate + L-alanine = glycine + pyruvate. It carries out the reaction (2S)-2-aminobutanoate + glyoxylate = 2-oxobutanoate + glycine. It catalyses the reaction glyoxylate + L-phenylalanine = 3-phenylpyruvate + glycine. The catalysed reaction is glyoxylate + L-serine = 3-hydroxypyruvate + glycine. The enzyme catalyses 2-oxobutanoate + L-alanine = (2S)-2-aminobutanoate + pyruvate. It carries out the reaction L-phenylalanine + pyruvate = 3-phenylpyruvate + L-alanine. It catalyses the reaction L-serine + pyruvate = 3-hydroxypyruvate + L-alanine. Its function is as follows. Catalyzes the pyridoxal 5'-phosphate-dependent transamination of alanine with glyoxylate as an amino group acceptor. Can also catalyze, although with much less efficiency, the transamination of amino-butyrate, phenylalanine and serine with glyoxylate or pyruvate as an amino group acceptor. Does not catalyze the transamination of both 3-hydroxykynurenine and L-kynurenine. May play a role in the detoxification of glyoxylate, a toxic plant metabolite from the fly diet. The protein is Alanine--glyoxylate aminotransferase of Drosophila melanogaster (Fruit fly).